Reading from the N-terminus, the 457-residue chain is Chromosomal replication initiator protein DnaA (457 aa).

Positions 1 to 77 (MDTNNNIEKE…EILSQNKVGM (77 aa)) are domain I, interacts with DnaA modulators. Residues 77–108 (MHLAHSVDVRIEVAPKIQVNAQSNINYKATKT) are domain II. Positions 109–323 (SVKDSYTFEN…GAIIKISVNA (215 aa)) are domain III, AAA+ region. Residues G153, G155, K156, and T157 each contribute to the ATP site. The interval 324 to 457 (NLMNATIDLN…DKKTAFNSSE (134 aa)) is domain IV, binds dsDNA.

It belongs to the DnaA family. In terms of assembly, oligomerizes as a right-handed, spiral filament on DNA at oriC.

The protein localises to the cytoplasm. In terms of biological role, plays an essential role in the initiation and regulation of chromosomal replication. ATP-DnaA binds to the origin of replication (oriC) to initiate formation of the DNA replication initiation complex once per cell cycle. Binds the DnaA box (a 9 base pair repeat at the origin) and separates the double-stranded (ds)DNA. Forms a right-handed helical filament on oriC DNA; dsDNA binds to the exterior of the filament while single-stranded (ss)DNA is stabiized in the filament's interior. The ATP-DnaA-oriC complex binds and stabilizes one strand of the AT-rich DNA unwinding element (DUE), permitting loading of DNA polymerase. After initiation quickly degrades to an ADP-DnaA complex that is not apt for DNA replication. Binds acidic phospholipids. This is Chromosomal replication initiator protein DnaA from Helicobacter pylori (strain J99 / ATCC 700824) (Campylobacter pylori J99).